A 729-amino-acid chain; its full sequence is E3 ubiquitin-protein ligase SH3RF2 (729 aa).

An RING-type zinc finger spans residues 12 to 53 (CPVCFEKLDVTAKVLPCQHTFCKPCLQRVFKAHKELRCPECR). The segment at 78 to 105 (SGQSSGRGGSFRRPGTMTLQDGRKSRTN) is disordered. SH3 domains follow at residues 125-184 (DGVP…VIKQ) and 187-252 (QPPP…PNLT). Positions 258-297 (EKNKGRQSSRTKNLSLVSSSSRGNTSTLRRGPGSRRKVPG) are disordered. Residues 263-285 (RQSSRTKNLSLVSSSSRGNTSTL) show a composition bias toward polar residues. Positions 370-459 (VVSLPGSQQH…RSPGLYTTWT (90 aa)) are interaction with PAK4. One can recognise an SH3 3 domain in the interval 380–441 (LSANMFVALH…PNNYVIPIFR (62 aa)). Disordered stretches follow at residues 497 to 526 (STAG…QRPL) and 610 to 677 (KSEP…SQPE). Over residues 517–526 (RKNGSLQRPL) the composition is skewed to polar residues. The segment at 641–646 (KTVRFQ) is interaction with PPP1CA. At Ser-649 the chain carries Phosphoserine.

Belongs to the SH3RF family. In terms of assembly, interacts with FASLG and PPP1CA. Interacts with PAK4 and TNFRSF1A. Interacts with DLK1, MAP3K10/MLK2, MAPK8IP1/JIP1, MAPK8IP2/JIP2 and MAPK8IP3/JIP3. Interacts with RAC1 (both active GTP- or inactive GDP-bound forms). In terms of processing, autoubiquitinated. In terms of tissue distribution, heart (at protein level). Up-regulated in colon cancer tissues as compared to normal colon tissues (at protein level). Testis. In the heart, present in the apex, left atrium, right atrium, left ventricle and right ventricle, but not in the aorta.

It is found in the nucleus. It carries out the reaction S-ubiquitinyl-[E2 ubiquitin-conjugating enzyme]-L-cysteine + [acceptor protein]-L-lysine = [E2 ubiquitin-conjugating enzyme]-L-cysteine + N(6)-ubiquitinyl-[acceptor protein]-L-lysine.. The protein operates within protein modification; protein ubiquitination. Functionally, has E3 ubiquitin-protein ligase activity. Acts as an anti-apoptotic regulator of the JNK pathway by ubiquitinating and promoting the degradation of SH3RF1, a scaffold protein that is required for pro-apoptotic JNK activation. Facilitates TNF-alpha-mediated recruitment of adapter proteins TRADD and RIPK1 to TNFRSF1A and regulates PAK4 protein stability via inhibition of its ubiquitin-mediated proteasomal degradation. Inhibits PPP1CA phosphatase activity. This Homo sapiens (Human) protein is E3 ubiquitin-protein ligase SH3RF2 (SH3RF2).